Here is a 620-residue protein sequence, read N- to C-terminus: tRNA uridine 5-carboxymethylaminomethyl modification enzyme MnmG (620 aa).

Residues 13–18 (GGGHAG), V125, and S182 each bind FAD. 280–294 (GPRYCPSVEDKIVKF) is an NAD(+) binding site. FAD is bound at residue N377.

It belongs to the MnmG family. In terms of assembly, homodimer. Heterotetramer of two MnmE and two MnmG subunits. Requires FAD as cofactor.

It is found in the cytoplasm. NAD-binding protein involved in the addition of a carboxymethylaminomethyl (cmnm) group at the wobble position (U34) of certain tRNAs, forming tRNA-cmnm(5)s(2)U34. This Sulfurihydrogenibium sp. (strain YO3AOP1) protein is tRNA uridine 5-carboxymethylaminomethyl modification enzyme MnmG.